The chain runs to 347 residues: NADH-ubiquinone oxidoreductase chain 2 (347 aa).

Transmembrane regions (helical) follow at residues 3–23 (PIIF…VMIS), 25–45 (HWLR…PIMM), 66–86 (ASML…QWTV), 96–116 (MLMT…FWVP), 122–142 (IPLS…MSVL), 145–165 (ILPS…IMIG), 178–198 (IMAY…PYNP), 200–220 (MMLL…LLFM), 237–257 (MPIM…LPPL), 274–294 (NSII…YFYM), and 325–345 (LLPT…ILSI).

Belongs to the complex I subunit 2 family. In terms of assembly, core subunit of respiratory chain NADH dehydrogenase (Complex I) which is composed of 45 different subunits. Interacts with TMEM242.

The protein resides in the mitochondrion inner membrane. It carries out the reaction a ubiquinone + NADH + 5 H(+)(in) = a ubiquinol + NAD(+) + 4 H(+)(out). In terms of biological role, core subunit of the mitochondrial membrane respiratory chain NADH dehydrogenase (Complex I) which catalyzes electron transfer from NADH through the respiratory chain, using ubiquinone as an electron acceptor. Essential for the catalytic activity and assembly of complex I. The chain is NADH-ubiquinone oxidoreductase chain 2 from Capra hircus (Goat).